The chain runs to 340 residues: Ferrochelatase (340 aa).

Positions 202 and 283 each coordinate Fe cation.

It belongs to the ferrochelatase family.

It localises to the cytoplasm. The enzyme catalyses heme b + 2 H(+) = protoporphyrin IX + Fe(2+). Its pathway is porphyrin-containing compound metabolism; protoheme biosynthesis; protoheme from protoporphyrin-IX: step 1/1. Catalyzes the ferrous insertion into protoporphyrin IX. The chain is Ferrochelatase from Acinetobacter baylyi (strain ATCC 33305 / BD413 / ADP1).